A 252-amino-acid polypeptide reads, in one-letter code: Ubiquinone/menaquinone biosynthesis C-methyltransferase UbiE (252 aa).

S-adenosyl-L-methionine contacts are provided by residues threonine 71, aspartate 100, 124–125 (DA), and serine 141.

This sequence belongs to the class I-like SAM-binding methyltransferase superfamily. MenG/UbiE family.

The catalysed reaction is a 2-demethylmenaquinol + S-adenosyl-L-methionine = a menaquinol + S-adenosyl-L-homocysteine + H(+). It carries out the reaction a 2-methoxy-6-(all-trans-polyprenyl)benzene-1,4-diol + S-adenosyl-L-methionine = a 5-methoxy-2-methyl-3-(all-trans-polyprenyl)benzene-1,4-diol + S-adenosyl-L-homocysteine + H(+). It participates in quinol/quinone metabolism; menaquinone biosynthesis; menaquinol from 1,4-dihydroxy-2-naphthoate: step 2/2. It functions in the pathway cofactor biosynthesis; ubiquinone biosynthesis. Functionally, methyltransferase required for the conversion of demethylmenaquinol (DMKH2) to menaquinol (MKH2) and the conversion of 2-polyprenyl-6-methoxy-1,4-benzoquinol (DDMQH2) to 2-polyprenyl-3-methyl-6-methoxy-1,4-benzoquinol (DMQH2). The polypeptide is Ubiquinone/menaquinone biosynthesis C-methyltransferase UbiE (Caulobacter vibrioides (strain ATCC 19089 / CIP 103742 / CB 15) (Caulobacter crescentus)).